An 89-amino-acid chain; its full sequence is Small ribosomal subunit protein uS15 (89 aa).

This sequence belongs to the universal ribosomal protein uS15 family. As to quaternary structure, part of the 30S ribosomal subunit. Forms a bridge to the 50S subunit in the 70S ribosome, contacting the 23S rRNA.

In terms of biological role, one of the primary rRNA binding proteins, it binds directly to 16S rRNA where it helps nucleate assembly of the platform of the 30S subunit by binding and bridging several RNA helices of the 16S rRNA. Its function is as follows. Forms an intersubunit bridge (bridge B4) with the 23S rRNA of the 50S subunit in the ribosome. The sequence is that of Small ribosomal subunit protein uS15 from Edwardsiella ictaluri (strain 93-146).